We begin with the raw amino-acid sequence, 942 residues long: MAAAAEPGARAWLGGGSPRPGSPACSPVLGSGGRARPGPGPGPGPERAGVRAPGPAAAPGHSFRKVTLTKPTFCHLCSDFIWGLAGFLCDVCNFMSHEKCLKHVRIPCTSVAPSLVRVPVAHCFGPRGLHKRKFCAVCRKVLEAPALHCEVCELHLHPDCVPFACSDCRQCHQDGHQDHDTHHHHWREGNLPSGARCEVCRKTCGSSDVLAGVRCEWCGVQAHSLCSAALAPECGFGRLRSLVLPPACVRLLPGGFSKTQSFRIVEAAEPGEGGDGADGSAAVGPGRETQATPESGKQTLKIFDGDDAVRRSQFRLVTVSRLAGAEEVLEAALRAHHIPEDPGHLELCRLPPSSQACDAWAGGKAGSAVISEEGRSPGSGEATPEAWVIRALPRAQEVLKIYPGWLKVGVAYVSVRVTPKSTARSVVLEVLPLLGRQAESPESFQLVEVAMGCRHVQRTMLMDEQPLLDRLQDIRQMSVRQVSQTRFYVAESRDVAPHVSLFVGGLPPGLSPEEYSSLLHEAGATKATVVSVSHIYSSQGAVVLDVACFAEAERLYMLLKDMAVRGRLLTALVLPDLLHAKLPPDSCPLLVFVNPKSGGLKGRDLLCSFRKLLNPHQVFDLTNGGPLPGLHLFSQVPCFRVLVCGGDGTVGWVLGALEETRYRLACPEPSVAILPLGTGNDLGRVLRWGAGYSGEDPFSVLLSVDEADAVLMDRWTILLDAHEAGSAENDTADAEPPKIVQMSNYCGIGIDAELSLDFHQAREEEPGKFTSRLHNKGVYVRVGLQKISHSRSLHKQIRLQVERQEVELPSIEGLIFINIPSWGSGADLWGSDSDTRFEKPRMDDGLLEVVGVTGVVHMGQVQGGLRSGIRIAQGSYFRVTLLKATPVQVDGEPWVQAPGHMIISAAGPKVHMLRKAKQKPRRAGTTRDARADAAPAPESDPR.

Residues 1 to 59 (MAAAAEPGARAWLGGGSPRPGSPACSPVLGSGGRARPGPGPGPGPERAGVRAPGPAAAP) are disordered. Phosphoserine is present on residues Ser22 and Ser26. The segment covering 45–59 (PERAGVRAPGPAAAP) has biased composition (low complexity). Phorbol-ester/DAG-type zinc fingers lie at residues 60–108 (GHSF…RIPC), 121–168 (AHCF…CSDC), and 183–234 (HHHW…APEC). Positions 269 to 295 (EPGEGGDGADGSAAVGPGRETQATPES) are disordered. Residues 395 to 494 (AQEVLKIYPG…TRFYVAESRD (100 aa)) enclose the Ras-associating domain. Short sequence motifs (LXXLL motif) lie at residues 555–559 (LYMLL) and 574–578 (LPDLL). In terms of domain architecture, DAGKc spans 584 to 721 (PDSCPLLVFV…MDRWTILLDA (138 aa)). Residues 908-942 (PKVHMLRKAKQKPRRAGTTRDARADAAPAPESDPR) are disordered. The segment covering 911-924 (HMLRKAKQKPRRAG) has biased composition (basic residues). A compositionally biased stretch (low complexity) spans 932-942 (DAAPAPESDPR).

It belongs to the eukaryotic diacylglycerol kinase family. In terms of assembly, interacts with RHOA (constitutively activated, GTP-bound); the interaction inhibits DGKQ. Interacts with PRKCE. Interacts with PRKCH. Interacts with PLCB1. Interacts with NR5A1; the interaction requires both LXXLL motifs in DGKQ and is required for full phosphatidic acid-mediated activation of NR5A1. In terms of processing, phosphorylated by PRKCE and PRKCH in vitro.

The protein resides in the cytoplasm. The protein localises to the cytosol. Its subcellular location is the cell membrane. It is found in the synapse. It localises to the cytoskeleton. The protein resides in the nucleus. The protein localises to the nucleus speckle. Its subcellular location is the nucleus matrix. It catalyses the reaction a 1,2-diacyl-sn-glycerol + ATP = a 1,2-diacyl-sn-glycero-3-phosphate + ADP + H(+). The enzyme catalyses a 1-O-alkyl-sn-glycerol + ATP = a 1-O-alkyl-sn-glycero-3-phosphate + ADP + H(+). It carries out the reaction 1-O-alkyl-2-acyl-sn-glycerol + ATP = 1-O-alkyl-2-acyl-sn-glycero-3-phosphate + ADP + H(+). The catalysed reaction is 1,2-di-(9Z-octadecenoyl)-sn-glycerol + ATP = 1,2-di-(9Z-octadecenoyl)-sn-glycero-3-phosphate + ADP + H(+). It catalyses the reaction 1-O-hexadecyl-sn-glycerol + ATP = 1-O-hexadecyl-sn-glycero-3-phosphate + ADP + H(+). The enzyme catalyses 1-O-hexadecyl-2-acetyl-sn-glycerol + ATP = 1-O-hexadecyl-2-acetyl-sn-glycero-3-phosphate + ADP + H(+). It carries out the reaction 1-octadecanoyl-2-(5Z,8Z,11Z,14Z-eicosatetraenoyl)-sn-glycerol + ATP = 1-octadecanoyl-2-(5Z,8Z,11Z,14Z-eicosatetraenoyl)-sn-glycero-3-phosphate + ADP + H(+). The protein operates within lipid metabolism; glycerolipid metabolism. With respect to regulation, activated by phosphatidylserine. Diacylglycerol kinase that converts diacylglycerol/DAG into phosphatidic acid/phosphatidate/PA and regulates the respective levels of these two bioactive lipids. Thereby, acts as a central switch between the signaling pathways activated by these second messengers with different cellular targets and opposite effects in numerous biological processes. Within the adrenocorticotropic hormone signaling pathway, produces phosphatidic acid which in turn activates NR5A1 and subsequent steroidogenic gene transcription. Also functions downstream of the nerve growth factor signaling pathway being specifically activated in the nucleus by the growth factor. Through its diacylglycerol activity also regulates synaptic vesicle endocytosis. This is Diacylglycerol kinase theta from Homo sapiens (Human).